Reading from the N-terminus, the 244-residue chain is Phosphonates import ATP-binding protein PhnC (244 aa).

Residues 6-244 (IECHNLETAY…LQAQFVVNSQ (239 aa)) form the ABC transporter domain. Position 41–48 (41–48 (GLNGAGKS)) interacts with ATP.

This sequence belongs to the ABC transporter superfamily. Phosphonates importer (TC 3.A.1.9.1) family. As to quaternary structure, the complex is composed of two ATP-binding proteins (PhnC), two transmembrane proteins (PhnE) and a solute-binding protein (PhnD).

It localises to the cell inner membrane. The enzyme catalyses phosphonate(out) + ATP + H2O = phosphonate(in) + ADP + phosphate + H(+). In terms of biological role, part of the ABC transporter complex PhnCDE involved in phosphonates import. Responsible for energy coupling to the transport system. The chain is Phosphonates import ATP-binding protein PhnC from Trichormus variabilis (strain ATCC 29413 / PCC 7937) (Anabaena variabilis).